The primary structure comprises 420 residues: Glucose-1-phosphate adenylyltransferase (420 aa).

Residues Tyr107, Gly172, 187–188, and Ser205 contribute to the alpha-D-glucose 1-phosphate site; that span reads EK.

Belongs to the bacterial/plant glucose-1-phosphate adenylyltransferase family. In terms of assembly, homotetramer.

The enzyme catalyses alpha-D-glucose 1-phosphate + ATP + H(+) = ADP-alpha-D-glucose + diphosphate. It functions in the pathway glycan biosynthesis; glycogen biosynthesis. Its function is as follows. Involved in the biosynthesis of ADP-glucose, a building block required for the elongation reactions to produce glycogen. Catalyzes the reaction between ATP and alpha-D-glucose 1-phosphate (G1P) to produce pyrophosphate and ADP-Glc. The polypeptide is Glucose-1-phosphate adenylyltransferase (Rhizobium etli (strain CIAT 652)).